The following is a 225-amino-acid chain: Leucyl/phenylalanyl-tRNA--protein transferase (225 aa).

Belongs to the L/F-transferase family.

It localises to the cytoplasm. The enzyme catalyses N-terminal L-lysyl-[protein] + L-leucyl-tRNA(Leu) = N-terminal L-leucyl-L-lysyl-[protein] + tRNA(Leu) + H(+). It catalyses the reaction N-terminal L-arginyl-[protein] + L-leucyl-tRNA(Leu) = N-terminal L-leucyl-L-arginyl-[protein] + tRNA(Leu) + H(+). It carries out the reaction L-phenylalanyl-tRNA(Phe) + an N-terminal L-alpha-aminoacyl-[protein] = an N-terminal L-phenylalanyl-L-alpha-aminoacyl-[protein] + tRNA(Phe). Functions in the N-end rule pathway of protein degradation where it conjugates Leu, Phe and, less efficiently, Met from aminoacyl-tRNAs to the N-termini of proteins containing an N-terminal arginine or lysine. This Rhodopseudomonas palustris (strain TIE-1) protein is Leucyl/phenylalanyl-tRNA--protein transferase.